Here is a 30-residue protein sequence, read N- to C-terminus: Snaclec coagulation factor IX/factor X-binding protein subunit A (30 aa).

In terms of domain architecture, C-type lectin spans Asp1 to Cys30. An intrachain disulfide couples Cys2 to Cys13.

It belongs to the snaclec family. Heterodimer of subunits A and B; disulfide-linked. Expressed by the venom gland.

The protein localises to the secreted. Its function is as follows. Anticoagulant protein which binds to the gamma-carboxyglutamic acid-domain regions of factors IX (F9) and factor X (F10) in the presence of calcium with a 1 to 1 stoichiometry. This chain is Snaclec coagulation factor IX/factor X-binding protein subunit A, found in Bothrops jararaca (Jararaca).